We begin with the raw amino-acid sequence, 184 residues long: Putative manganese efflux pump MntP (184 aa).

The next 5 membrane-spanning stretches (helical) occupy residues 39 to 59, 65 to 85, 102 to 122, 132 to 152, and 161 to 181; these read IFGV…LSFV, IDHF…ILEA, LALG…TFSF, LIIG…GKIL, and LVLG…THLV.

This sequence belongs to the MntP (TC 9.B.29) family.

Its subcellular location is the cell inner membrane. Functionally, probably functions as a manganese efflux pump. The chain is Putative manganese efflux pump MntP from Campylobacter curvus (strain 525.92).